Reading from the N-terminus, the 924-residue chain is Periplasmic nitrate reductase (924 aa).

Residues 1–30 constitute a signal peptide (tat-type signal); sequence MNRRDFIKNTAIASAASVAGLSVPSSMLGA. Residues 35–91 enclose the 4Fe-4S Mo/W bis-MGD-type domain; sequence WKWDKAVCRFCGTGCGIMIARKDGKIVATKGDPAAPVNRGLNCIKGYFNAKIMYGED. Residues C42, C45, C49, and C77 each contribute to the [4Fe-4S] cluster site. Residues K79, Q147, N172, C176, 209-216, M417, Q421, N527, 552-553, K575, D602, and 814-823 contribute to the Mo-bis(molybdopterin guanine dinucleotide) site; these read WGANMAEM, SD, and TGRVLEHWHS. W890 is a binding site for substrate. Mo-bis(molybdopterin guanine dinucleotide) is bound by residues N898 and K915.

It belongs to the prokaryotic molybdopterin-containing oxidoreductase family. NasA/NapA/NarB subfamily. As to quaternary structure, component of the periplasmic nitrate reductase NapAB complex composed of NapA and NapB. It depends on [4Fe-4S] cluster as a cofactor. Requires Mo-bis(molybdopterin guanine dinucleotide) as cofactor. Post-translationally, predicted to be exported by the Tat system. The position of the signal peptide cleavage has not been experimentally proven.

It localises to the periplasm. The catalysed reaction is 2 Fe(II)-[cytochrome] + nitrate + 2 H(+) = 2 Fe(III)-[cytochrome] + nitrite + H2O. Catalytic subunit of the periplasmic nitrate reductase complex NapAB. Receives electrons from NapB and catalyzes the reduction of nitrate to nitrite. This Campylobacter jejuni subsp. jejuni serotype O:2 (strain ATCC 700819 / NCTC 11168) protein is Periplasmic nitrate reductase.